We begin with the raw amino-acid sequence, 1297 residues long: Phosphoribosylformylglycinamidine synthase (1297 aa).

A disordered region spans residues 304 to 323 (PFPGAATGSGGEIRDEGATG). ATP contacts are provided by residues 307–318 (GAATGSGGEIRD) and Ala-678. Mg(2+) is bound by residues Asp-679, Glu-718, Asn-722, and Asp-886. An ATP-binding site is contributed by Ser-888. The Glutamine amidotransferase type-1 domain maps to 1043 to 1297 (RIAILREQGV…LFQNARVALG (255 aa)). Catalysis depends on Cys-1137, which acts as the Nucleophile. Residues His-1262 and Glu-1264 contribute to the active site.

This sequence in the N-terminal section; belongs to the FGAMS family. As to quaternary structure, monomer.

The protein localises to the cytoplasm. The catalysed reaction is N(2)-formyl-N(1)-(5-phospho-beta-D-ribosyl)glycinamide + L-glutamine + ATP + H2O = 2-formamido-N(1)-(5-O-phospho-beta-D-ribosyl)acetamidine + L-glutamate + ADP + phosphate + H(+). It functions in the pathway purine metabolism; IMP biosynthesis via de novo pathway; 5-amino-1-(5-phospho-D-ribosyl)imidazole from N(2)-formyl-N(1)-(5-phospho-D-ribosyl)glycinamide: step 1/2. Phosphoribosylformylglycinamidine synthase involved in the purines biosynthetic pathway. Catalyzes the ATP-dependent conversion of formylglycinamide ribonucleotide (FGAR) and glutamine to yield formylglycinamidine ribonucleotide (FGAM) and glutamate. This chain is Phosphoribosylformylglycinamidine synthase, found in Histophilus somni (strain 129Pt) (Haemophilus somnus).